The primary structure comprises 194 residues: uncharacterized protein (194 aa).

This is an uncharacterized protein from Haemophilus influenzae (strain ATCC 51907 / DSM 11121 / KW20 / Rd).